A 317-amino-acid polypeptide reads, in one-letter code: tRNA pseudouridine synthase B (317 aa).

The Nucleophile role is filled by Asp47.

It belongs to the pseudouridine synthase TruB family. Type 1 subfamily.

The catalysed reaction is uridine(55) in tRNA = pseudouridine(55) in tRNA. In terms of biological role, responsible for synthesis of pseudouridine from uracil-55 in the psi GC loop of transfer RNAs. This Shewanella denitrificans (strain OS217 / ATCC BAA-1090 / DSM 15013) protein is tRNA pseudouridine synthase B.